The following is a 142-amino-acid chain: MAKKIAGYVKLQVPAGDAKPAPPIGPALGQRGLNIMEFCKAFNAKTAQMEKGTPIPVVITAYADRSFTFEMKLPPVSYFLKKASGIQSGAKTTGRGFIGKVTKAQVREIAEKKLPDLNCQSVDAAATMIEGSARSMGLQVVE.

The protein belongs to the universal ribosomal protein uL11 family. In terms of assembly, part of the ribosomal stalk of the 50S ribosomal subunit. Interacts with L10 and the large rRNA to form the base of the stalk. L10 forms an elongated spine to which L12 dimers bind in a sequential fashion forming a multimeric L10(L12)X complex. In terms of processing, one or more lysine residues are methylated.

In terms of biological role, forms part of the ribosomal stalk which helps the ribosome interact with GTP-bound translation factors. This chain is Large ribosomal subunit protein uL11, found in Beijerinckia indica subsp. indica (strain ATCC 9039 / DSM 1715 / NCIMB 8712).